The sequence spans 447 residues: MREILHIQGGQCGNQIGAKFWEVVCAEHGIDATGRYDGDSDLQLERVNVYYNEASCGRFVPRAVLMDLEPGTMDSVRSGPYGHIFRPDNFVFGQSGAGNNWAKGHYTEGAELIDAVLDVVRKEAENCDCLQGFQVCHSLGGGTGSGMGTLLISKIREEYPDRMMLTFSVFPSPKVSDTVVEPYNATLSVHQLVENADECMVLDNEALYDICFRTLKLTTPSFGDLNHLISATMSGVTCCLRFPGQLNSDLRKLAVNLIPFPRLHFFMVGFAPLTSRGSQQYRALTVPELTQQMWDAKNMMCAADPRHGRYLTASAMFRGKMSTKEVDEQMLNVQNKNSSYFVEWIPNNVKSTVCDIPPTGLKMASTFIGNSTSIQEMFRRVSEQFTAMFRRKAFLHWYTGEGMDEMEFTEAESNMNDLVSEYQQYQDATADDEGEYEDEEEEADLQD.

GTP-binding residues include Q11, E69, S138, G142, T143, G144, N204, and N226. Mg(2+) is bound at residue E69. The tract at residues 419–447 is disordered; sequence VSEYQQYQDATADDEGEYEDEEEEADLQD. A compositionally biased stretch (acidic residues) spans 429–447; sequence TADDEGEYEDEEEEADLQD.

It belongs to the tubulin family. In terms of assembly, dimer of alpha and beta chains. A typical microtubule is a hollow water-filled tube with an outer diameter of 25 nm and an inner diameter of 15 nM. Alpha-beta heterodimers associate head-to-tail to form protofilaments running lengthwise along the microtubule wall with the beta-tubulin subunit facing the microtubule plus end conferring a structural polarity. Microtubules usually have 13 protofilaments but different protofilament numbers can be found in some organisms and specialized cells. Mg(2+) serves as cofactor. In terms of tissue distribution, expressed in leaf sheaths and suspension cultured cells.

The protein localises to the cytoplasm. It localises to the cytoskeleton. Functionally, tubulin is the major constituent of microtubules, a cylinder consisting of laterally associated linear protofilaments composed of alpha- and beta-tubulin heterodimers. Microtubules grow by the addition of GTP-tubulin dimers to the microtubule end, where a stabilizing cap forms. Below the cap, tubulin dimers are in GDP-bound state, owing to GTPase activity of alpha-tubulin. This chain is Tubulin beta-2 chain (TUBB2), found in Oryza sativa subsp. japonica (Rice).